The primary structure comprises 339 residues: Homeobox protein Hox-D13 (339 aa).

The tract at residues 1-33 (MSRSGTWDMDGLRADGGAAGAAPASSSSSVAAP) is disordered. The segment covering 20–33 (GAAPASSSSSVAAP) has biased composition (low complexity). The segment at residues 272-331 (GRKKRVPYTKLQLKELENEYAINKFINKDKRRRISAATNLSERQVTIWFQNRRVKDKKIV) is a DNA-binding region (homeobox).

The protein belongs to the Abd-B homeobox family.

The protein localises to the nucleus. In terms of biological role, sequence-specific transcription factor that binds gene promoters and activates their transcription. Part of a developmental regulatory system that provides cells with specific positional identities on the anterior-posterior axis. The sequence is that of Homeobox protein Hox-D13 (Hoxd13) from Mus musculus (Mouse).